We begin with the raw amino-acid sequence, 661 residues long: Heme transporter BhuA (661 aa).

Positions 1–23 (MKFTRTLVLASTSLLATVATSQA) are cleaved as a signal peptide. In terms of domain architecture, TBDR plug spans 48 to 159 (KDNIEATGGT…AAGAIRYETV (112 aa)). The TBDR beta-barrel domain maps to 170 to 661 (TFGARIIGSY…TFTFQTAFKF (492 aa)).

The protein belongs to the TonB-dependent receptor family.

The protein resides in the cell outer membrane. Heme transporter. This chain is Heme transporter BhuA (bhuA), found in Brucella ovis (strain ATCC 25840 / 63/290 / NCTC 10512).